The chain runs to 570 residues: Hydroxylamine reductase (570 aa).

Residues C5, C8, C17, and C23 each coordinate [4Fe-4S] cluster. The hybrid [4Fe-2O-2S] cluster site is built by H266, E290, C334, C425, C453, C478, E513, and K515. Residue C425 is modified to Cysteine persulfide.

The protein belongs to the HCP family. [4Fe-4S] cluster serves as cofactor. Hybrid [4Fe-2O-2S] cluster is required as a cofactor.

The protein localises to the cytoplasm. It carries out the reaction A + NH4(+) + H2O = hydroxylamine + AH2 + H(+). Catalyzes the reduction of hydroxylamine to form NH(3) and H(2)O. The chain is Hydroxylamine reductase from Clostridium botulinum (strain Loch Maree / Type A3).